The following is a 304-amino-acid chain: Acetylglutamate kinase (304 aa).

Residues 77–78, R99, and N201 each bind substrate; that span reads GG.

This sequence belongs to the acetylglutamate kinase family. ArgB subfamily.

The protein resides in the cytoplasm. The enzyme catalyses N-acetyl-L-glutamate + ATP = N-acetyl-L-glutamyl 5-phosphate + ADP. The protein operates within amino-acid biosynthesis; L-arginine biosynthesis; N(2)-acetyl-L-ornithine from L-glutamate: step 2/4. Functionally, catalyzes the ATP-dependent phosphorylation of N-acetyl-L-glutamate. The protein is Acetylglutamate kinase of Methylibium petroleiphilum (strain ATCC BAA-1232 / LMG 22953 / PM1).